We begin with the raw amino-acid sequence, 146 residues long: D-aminoacyl-tRNA deacylase (146 aa).

The short motif at 137 to 138 (GP) is the Gly-cisPro motif, important for rejection of L-amino acids element.

The protein belongs to the DTD family. Homodimer.

It localises to the cytoplasm. It carries out the reaction glycyl-tRNA(Ala) + H2O = tRNA(Ala) + glycine + H(+). The catalysed reaction is a D-aminoacyl-tRNA + H2O = a tRNA + a D-alpha-amino acid + H(+). In terms of biological role, an aminoacyl-tRNA editing enzyme that deacylates mischarged D-aminoacyl-tRNAs. Also deacylates mischarged glycyl-tRNA(Ala), protecting cells against glycine mischarging by AlaRS. Acts via tRNA-based rather than protein-based catalysis; rejects L-amino acids rather than detecting D-amino acids in the active site. By recycling D-aminoacyl-tRNA to D-amino acids and free tRNA molecules, this enzyme counteracts the toxicity associated with the formation of D-aminoacyl-tRNA entities in vivo and helps enforce protein L-homochirality. This Cellvibrio japonicus (strain Ueda107) (Pseudomonas fluorescens subsp. cellulosa) protein is D-aminoacyl-tRNA deacylase.